Here is a 159-residue protein sequence, read N- to C-terminus: Cytochrome b6-f complex subunit 4 (159 aa).

3 helical membrane passes run 35-55, 93-113, and 127-147; these read ILIF…LAVL, LLGV…PFIE, and ATAV…GAMI.

The protein belongs to the cytochrome b family. PetD subfamily. As to quaternary structure, the 4 large subunits of the cytochrome b6-f complex are cytochrome b6, subunit IV (17 kDa polypeptide, PetD), cytochrome f and the Rieske protein, while the 4 small subunits are PetG, PetL, PetM and PetN. The complex functions as a dimer.

It localises to the cell inner membrane. Functionally, component of the cytochrome b6-f complex, which mediates electron transfer between photosystem II (PSII) and photosystem I (PSI), cyclic electron flow around PSI, and state transitions. The polypeptide is Cytochrome b6-f complex subunit 4 (Gloeobacter violaceus (strain ATCC 29082 / PCC 7421)).